A 176-amino-acid polypeptide reads, in one-letter code: NAD(P)H-quinone oxidoreductase subunit 6, chloroplastic (176 aa).

5 helical membrane passes run 10–30 (ILVL…VLLT), 33–53 (IYSA…YFLL), 60–80 (VAQL…AVMF), 95–115 (IGDG…MTTI), and 152–172 (FYLP…GAIT).

The protein belongs to the complex I subunit 6 family. NDH is composed of at least 16 different subunits, 5 of which are encoded in the nucleus.

Its subcellular location is the plastid. It is found in the chloroplast thylakoid membrane. It carries out the reaction a plastoquinone + NADH + (n+1) H(+)(in) = a plastoquinol + NAD(+) + n H(+)(out). The enzyme catalyses a plastoquinone + NADPH + (n+1) H(+)(in) = a plastoquinol + NADP(+) + n H(+)(out). In terms of biological role, NDH shuttles electrons from NAD(P)H:plastoquinone, via FMN and iron-sulfur (Fe-S) centers, to quinones in the photosynthetic chain and possibly in a chloroplast respiratory chain. The immediate electron acceptor for the enzyme in this species is believed to be plastoquinone. Couples the redox reaction to proton translocation, and thus conserves the redox energy in a proton gradient. The sequence is that of NAD(P)H-quinone oxidoreductase subunit 6, chloroplastic (ndhG) from Brachypodium distachyon (Purple false brome).